Consider the following 104-residue polypeptide: Colipase-like protein 2 (104 aa).

A signal peptide spans 1–19 (MAFTQALVTVLAFLVGTLP). 5 cysteine pairs are disulfide-bonded: cysteine 38/cysteine 49, cysteine 44/cysteine 60, cysteine 48/cysteine 82, cysteine 70/cysteine 90, and cysteine 84/cysteine 101.

This sequence belongs to the colipase family.

The protein localises to the secreted. This chain is Colipase-like protein 2 (Clpsl2), found in Rattus norvegicus (Rat).